The sequence spans 70 residues: Large ribosomal subunit protein bL31 (70 aa).

Positions 16, 18, 38, and 41 each coordinate Zn(2+).

This sequence belongs to the bacterial ribosomal protein bL31 family. Type A subfamily. As to quaternary structure, part of the 50S ribosomal subunit. Requires Zn(2+) as cofactor.

Its function is as follows. Binds the 23S rRNA. In Bifidobacterium longum (strain DJO10A), this protein is Large ribosomal subunit protein bL31.